The following is an 85-amino-acid chain: Small ribosomal subunit protein bS16 (85 aa).

Belongs to the bacterial ribosomal protein bS16 family.

The chain is Small ribosomal subunit protein bS16 from Buchnera aphidicola subsp. Schizaphis graminum (strain Sg).